The chain runs to 103 residues: Flagellar hook-basal body complex protein FliE (103 aa).

Belongs to the FliE family.

The protein resides in the bacterial flagellum basal body. This Helicobacter hepaticus (strain ATCC 51449 / 3B1) protein is Flagellar hook-basal body complex protein FliE.